The following is an 862-amino-acid chain: Probable disease resistance protein At5g43740 (862 aa).

Positions 24–61 (RNYIHMMESNLDALQKTMEELKNGRDDLLGRVSIEEDK) form a coiled coil. The 304-residue stretch at 135-438 (MVAQEIIHKV…CEGFINPNRY (304 aa)) folds into the NB-ARC domain. 178–185 (GMGGVGKT) contacts ATP. LRR repeat units follow at residues 511-532 (IVRT…SKCP), 533-555 (NLST…FFRF), 558-580 (KLVV…ISNL), and 582-604 (SLQY…KKLR).

This sequence belongs to the disease resistance NB-LRR family.

In terms of biological role, probable disease resistance protein. The protein is Probable disease resistance protein At5g43740 of Arabidopsis thaliana (Mouse-ear cress).